A 384-amino-acid chain; its full sequence is Aryl-hydrocarbon-interacting protein-like 1 (384 aa).

One can recognise a PPIase FKBP-type domain in the interval 53–145; the sequence is RQVGQPMHII…DLDELQKEPQ (93 aa). TPR repeat units lie at residues 178–211, 230–263, and 264–297; these read VPVL…LRNL, NTLI…HPGI, and VKAY…EPSM. Positions 328–384 are disordered; sequence SQGATQPPAEPPTEPPAQSSTEPPAEPPPAPSAELSAGPPAETATEPPPSPGHSLQH. A compositionally biased stretch (low complexity) spans 359–372; it reads SAELSAGPPAETAT.

In terms of assembly, interacts with NUB1.

It is found in the cytoplasm. The protein resides in the nucleus. In terms of biological role, may be important in protein trafficking and/or protein folding and stabilization. This Pan paniscus (Pygmy chimpanzee) protein is Aryl-hydrocarbon-interacting protein-like 1 (AIPL1).